Reading from the N-terminus, the 346-residue chain is Cyclic GMP-AMP synthase-like protein (346 aa).

ATP contacts are provided by residues serine 58 and 70 to 72 (EFD). Mg(2+) is bound by residues glutamate 70, aspartate 72, and aspartate 165. GTP contacts are provided by residues aspartate 165 and 212-219 (MVCAPHWE). ATP-binding positions include 216 to 219 (PHWE), lysine 237, and 252 to 256 (SYMLK).

It belongs to the mab-21 family. It depends on Mg(2+) as a cofactor. Mn(2+) is required as a cofactor.

Its activity is regulated as follows. Activated in response of some unknown stimulus. Not activated in response to L-monocytogenes infection. Its function is as follows. Probable nucleotidyltransferase that catalyzes the formation of cyclic dinucleotide second messenger in response to some unknown stimulus. Does not catalyze the formation of cyclic GMP-AMP from ATP and GTP. This is Cyclic GMP-AMP synthase-like protein from Drosophila melanogaster (Fruit fly).